Consider the following 243-residue polypeptide: 3-deoxy-manno-octulosonate cytidylyltransferase (243 aa).

This sequence belongs to the KdsB family.

The protein localises to the cytoplasm. It catalyses the reaction 3-deoxy-alpha-D-manno-oct-2-ulosonate + CTP = CMP-3-deoxy-beta-D-manno-octulosonate + diphosphate. It participates in nucleotide-sugar biosynthesis; CMP-3-deoxy-D-manno-octulosonate biosynthesis; CMP-3-deoxy-D-manno-octulosonate from 3-deoxy-D-manno-octulosonate and CTP: step 1/1. The protein operates within bacterial outer membrane biogenesis; lipopolysaccharide biosynthesis. Its function is as follows. Activates KDO (a required 8-carbon sugar) for incorporation into bacterial lipopolysaccharide in Gram-negative bacteria. In Bartonella quintana (strain Toulouse) (Rochalimaea quintana), this protein is 3-deoxy-manno-octulosonate cytidylyltransferase.